Consider the following 524-residue polypeptide: GMP synthase [glutamine-hydrolyzing] (524 aa).

The region spanning 10 to 199 is the Glutamine amidotransferase type-1 domain; sequence PVLVVDFGAQ…LTEVAGLEQT (190 aa). Cys-87 serves as the catalytic Nucleophile. Active-site residues include His-173 and Glu-175. The 199-residue stretch at 200–398 folds into the GMPS ATP-PPase domain; that stretch reads WTSANIAQQL…LGLPEEIVAR (199 aa). 228 to 234 serves as a coordination point for ATP; the sequence is SGGVDSA.

In terms of assembly, homodimer.

The catalysed reaction is XMP + L-glutamine + ATP + H2O = GMP + L-glutamate + AMP + diphosphate + 2 H(+). It participates in purine metabolism; GMP biosynthesis; GMP from XMP (L-Gln route): step 1/1. Catalyzes the synthesis of GMP from XMP. The polypeptide is GMP synthase [glutamine-hydrolyzing] (guaA) (Corynebacterium ammoniagenes (Brevibacterium ammoniagenes)).